The following is a 74-amino-acid chain: Putative defensin-like protein 36 (74 aa).

The first 22 residues, 1-22 (MASNKVSFFLVLCLCILLAGEC), serve as a signal peptide directing secretion. 3 disulfide bridges follow: Cys-33-Cys-59, Cys-45-Cys-69, and Cys-49-Cys-71.

It belongs to the DEFL family.

The protein localises to the secreted. The chain is Putative defensin-like protein 36 from Arabidopsis thaliana (Mouse-ear cress).